The chain runs to 394 residues: Exodeoxyribonuclease 7 large subunit (394 aa).

It belongs to the XseA family. As to quaternary structure, heterooligomer composed of large and small subunits.

It localises to the cytoplasm. The enzyme catalyses Exonucleolytic cleavage in either 5'- to 3'- or 3'- to 5'-direction to yield nucleoside 5'-phosphates.. Bidirectionally degrades single-stranded DNA into large acid-insoluble oligonucleotides, which are then degraded further into small acid-soluble oligonucleotides. The sequence is that of Exodeoxyribonuclease 7 large subunit from Thermotoga petrophila (strain ATCC BAA-488 / DSM 13995 / JCM 10881 / RKU-1).